The sequence spans 418 residues: E3 ubiquitin-protein ligase makorin-2 (418 aa).

C3H1-type zinc fingers lie at residues 2–29 (NTKH…HDLA) and 31–58 (SKPS…HVKP). Residues 76 to 100 (ESTPPLLPTQEAAAPVTKSAPQRRE) are disordered. The C3H1-type 3 zinc finger occupies 164 to 191 (DAPQQLCPFAQAGGCHYGESCPYIHGNV). The tract at residues 192 to 221 (CEICGLQVLHPYDQEQRGHHEKLCMANFER) is makorin-type Cys-His. The RING-type zinc-finger motif lies at 237 to 291 (CSICMERVYDKQSPSERRFGILSNCHHTYCLACIRQWRCARQFENPVIKSCPECR). The C3H1-type 4 zinc-finger motif lies at 320 to 349 (GMGKKACKYFDQGRGTCPFGGKCLYLHAYP).

It localises to the cytoplasm. The protein resides in the nucleus. The enzyme catalyses S-ubiquitinyl-[E2 ubiquitin-conjugating enzyme]-L-cysteine + [acceptor protein]-L-lysine = [E2 ubiquitin-conjugating enzyme]-L-cysteine + N(6)-ubiquitinyl-[acceptor protein]-L-lysine.. It functions in the pathway protein modification; protein ubiquitination. In terms of biological role, E3 ubiquitin ligase catalyzing the covalent attachment of ubiquitin moieties onto substrate proteins. Inhibits neurogenesis and axis formation during embryonic development by modulating the phosphatidylinositol 3-kinase (PI3K) pathway. Acts downstream of PI3K and akt1 to up-regulate gsk3b mRNA expression. The polypeptide is E3 ubiquitin-protein ligase makorin-2 (mkrn2) (Xenopus tropicalis (Western clawed frog)).